The sequence spans 225 residues: Octanoyltransferase (225 aa).

The BPL/LPL catalytic domain occupies 29 to 210; sequence PDTDDEIWVV…RLIAHLDGAT (182 aa). Substrate is bound by residues 69–76, 141–143, and 154–156; these read RGGQITYH, ALG, and GLS. Residue cysteine 172 is the Acyl-thioester intermediate of the active site.

This sequence belongs to the LipB family.

The protein localises to the cytoplasm. The catalysed reaction is octanoyl-[ACP] + L-lysyl-[protein] = N(6)-octanoyl-L-lysyl-[protein] + holo-[ACP] + H(+). It functions in the pathway protein modification; protein lipoylation via endogenous pathway; protein N(6)-(lipoyl)lysine from octanoyl-[acyl-carrier-protein]: step 1/2. Functionally, catalyzes the transfer of endogenously produced octanoic acid from octanoyl-acyl-carrier-protein onto the lipoyl domains of lipoate-dependent enzymes. Lipoyl-ACP can also act as a substrate although octanoyl-ACP is likely to be the physiological substrate. The chain is Octanoyltransferase from Burkholderia pseudomallei (strain K96243).